A 459-amino-acid chain; its full sequence is Cysteine desulfurase (459 aa).

A mitochondrion-targeting transit peptide spans M1 to R17. The pyridoxal 5'-phosphate site is built by A129, T130, Q237, S257, and H259. N6-(pyridoxal phosphate)lysine is present on K260. T297 is a pyridoxal 5'-phosphate binding site. The Cysteine persulfide intermediate role is filled by C383. Residue C383 participates in [2Fe-2S] cluster binding. C383 provides a ligand contact to Zn(2+). C383 bears the Cysteine persulfide mark.

It belongs to the class-V pyridoxal-phosphate-dependent aminotransferase family. NifS/IscS subfamily. In terms of assembly, homodimer. Component of the mitochondrial core iron-sulfur cluster (ISC) complex composed of NFS1, LYRM4, NDUFAB1, ISCU, FXN, and FDX2; this complex is a heterohexamer containing two copies of each monomer. Component of cyteine desulfurase complex composed of NFS1, LYRM4 and NDUFAB1; this complex contributes to the activation of cysteine desulfurase activity and NFS1 stabilization. Interacts (homodimer form) with ISCU (D-state); each monomer interacts with the C-terminal regions of each NFS1 monomer. Interacts with HSPA9. Interacts (via homodimer form) with FDX2. Interacts (via homodimer form) with FXN. Interacts with LYRM4. Component of a complex composed of FXN, NFS1, LYRM4 and ISCU. Pyridoxal 5'-phosphate is required as a cofactor. Post-translationally, N-gluconoylated. In terms of processing, cysteine persulfide intermediate is reduced by thiol-containing molecules like glutathione and L-cysteine. Persulfide reduction is a rate-limiting step of cysteine desulfurase catalytic cycle. As to expression, ubiquitous.

It localises to the mitochondrion. The enzyme catalyses (sulfur carrier)-H + L-cysteine = (sulfur carrier)-SH + L-alanine. It catalyses the reaction L-cysteinyl-[cysteine desulfurase] + L-cysteine = S-sulfanyl-L-cysteinyl-[cysteine desulfurase] + L-alanine. Its activity is regulated as follows. Active only in complex with LYRM4. Its function is as follows. Mitochondrial cysteine desulfurase, of the core iron-sulfur cluster (ISC) assembly complex, that catalyzes the desulfuration of L-cysteine to L-alanine, as component of the cysteine desulfurase complex, leading to the formation of a cysteine persulfide intermediate at the active site cysteine residue and participates in the [2Fe-2S] clusters assembly on the scaffolding protein ISCU. The persulfide is then transferred on the flexible Cys loop from the catalytic site of NFS1 to the surface of NFS1. After the NFS1-linked persulfide sulfur is transferred to one of the conserved Cys residues of the scaffold, a reaction assisted by FXN. The core iron-sulfur cluster (ISC) assembly complex is involved in the de novo synthesis of a [2Fe-2S] cluster, the first step of the mitochondrial iron-sulfur protein biogenesis. This process is initiated by the cysteine desulfurase complex (NFS1:LYRM4:NDUFAB1) that produces persulfide which is delivered on the scaffold protein ISCU in a FXN-dependent manner. Then this complex is stabilized by FDX2 which provides reducing equivalents to accomplish the [2Fe-2S] cluster assembly. Finally, the [2Fe-2S] cluster is transferred from ISCU to chaperone proteins, including HSCB, HSPA9 and GLRX5. This is Cysteine desulfurase from Mus musculus (Mouse).